We begin with the raw amino-acid sequence, 314 residues long: Putative S-adenosyl-L-methionine-dependent methyltransferase MAB_3886c (314 aa).

S-adenosyl-L-methionine-binding positions include aspartate 133 and 162-163 (DL).

It belongs to the UPF0677 family.

Exhibits S-adenosyl-L-methionine-dependent methyltransferase activity. The chain is Putative S-adenosyl-L-methionine-dependent methyltransferase MAB_3886c from Mycobacteroides abscessus (strain ATCC 19977 / DSM 44196 / CCUG 20993 / CIP 104536 / JCM 13569 / NCTC 13031 / TMC 1543 / L948) (Mycobacterium abscessus).